A 656-amino-acid chain; its full sequence is Protein NO VEIN-LIKE (656 aa).

The disordered stretch occupies residues 283–375 (DKDYCGKHTR…HVKQKIPKSA (93 aa)). The span at 299–308 (EENDSADYEV) shows a compositional bias: acidic residues. Positions 342 to 353 (ESRNHEKSDSPK) are enriched in basic and acidic residues. Basic residues predominate over residues 354–371 (LLRRGPSKLRRGHVKQKI).

This is Protein NO VEIN-LIKE from Arabidopsis thaliana (Mouse-ear cress).